The following is a 530-amino-acid chain: Autoinducer-2 kinase (530 aa).

Belongs to the FGGY kinase family.

The protein resides in the cytoplasm. It carries out the reaction (S)-4,5-dihydroxypentane-2,3-dione + ATP = (2S)-2-hydroxy-3,4-dioxopentyl phosphate + ADP + H(+). Catalyzes the phosphorylation of autoinducer-2 (AI-2) to phospho-AI-2, which subsequently inactivates the transcriptional regulator LsrR and leads to the transcription of the lsr operon. Phosphorylates the ring-open form of (S)-4,5-dihydroxypentane-2,3-dione (DPD), which is the precursor to all AI-2 signaling molecules, at the C5 position. This is Autoinducer-2 kinase from Escherichia coli O139:H28 (strain E24377A / ETEC).